Consider the following 218-residue polypeptide: ATP phosphoribosyltransferase (218 aa).

Belongs to the ATP phosphoribosyltransferase family. Short subfamily. In terms of assembly, heteromultimer composed of HisG and HisZ subunits.

The protein localises to the cytoplasm. It catalyses the reaction 1-(5-phospho-beta-D-ribosyl)-ATP + diphosphate = 5-phospho-alpha-D-ribose 1-diphosphate + ATP. It functions in the pathway amino-acid biosynthesis; L-histidine biosynthesis; L-histidine from 5-phospho-alpha-D-ribose 1-diphosphate: step 1/9. In terms of biological role, catalyzes the condensation of ATP and 5-phosphoribose 1-diphosphate to form N'-(5'-phosphoribosyl)-ATP (PR-ATP). Has a crucial role in the pathway because the rate of histidine biosynthesis seems to be controlled primarily by regulation of HisG enzymatic activity. The sequence is that of ATP phosphoribosyltransferase (hisG) from Deinococcus radiodurans (strain ATCC 13939 / DSM 20539 / JCM 16871 / CCUG 27074 / LMG 4051 / NBRC 15346 / NCIMB 9279 / VKM B-1422 / R1).